The chain runs to 298 residues: Aspartate carbamoyltransferase catalytic subunit (298 aa).

Carbamoyl phosphate-binding residues include Arg-50 and Thr-51. Lys-79 contributes to the L-aspartate binding site. Arg-100, His-128, and Gln-131 together coordinate carbamoyl phosphate. The L-aspartate site is built by Arg-160 and Arg-221. Leu-260 and Pro-261 together coordinate carbamoyl phosphate.

Belongs to the aspartate/ornithine carbamoyltransferase superfamily. ATCase family. In terms of assembly, heterooligomer of catalytic and regulatory chains.

The enzyme catalyses carbamoyl phosphate + L-aspartate = N-carbamoyl-L-aspartate + phosphate + H(+). It participates in pyrimidine metabolism; UMP biosynthesis via de novo pathway; (S)-dihydroorotate from bicarbonate: step 2/3. Its function is as follows. Catalyzes the condensation of carbamoyl phosphate and aspartate to form carbamoyl aspartate and inorganic phosphate, the committed step in the de novo pyrimidine nucleotide biosynthesis pathway. The protein is Aspartate carbamoyltransferase catalytic subunit of Methanospirillum hungatei JF-1 (strain ATCC 27890 / DSM 864 / NBRC 100397 / JF-1).